The following is a 395-amino-acid chain: LL-diaminopimelate aminotransferase (395 aa).

Residues Y14 and G41 each contribute to the substrate site. Pyridoxal 5'-phosphate-binding positions include Y71, 104–105 (AK), Y128, N174, Y205, and 233–235 (SFS). Positions 105, 128, and 174 each coordinate substrate. K236 is subject to N6-(pyridoxal phosphate)lysine. R244 and N275 together coordinate pyridoxal 5'-phosphate. Substrate is bound by residues N275 and R368.

This sequence belongs to the class-I pyridoxal-phosphate-dependent aminotransferase family. LL-diaminopimelate aminotransferase subfamily. Homodimer. Pyridoxal 5'-phosphate serves as cofactor.

It carries out the reaction (2S,6S)-2,6-diaminopimelate + 2-oxoglutarate = (S)-2,3,4,5-tetrahydrodipicolinate + L-glutamate + H2O + H(+). It functions in the pathway amino-acid biosynthesis; L-lysine biosynthesis via DAP pathway; LL-2,6-diaminopimelate from (S)-tetrahydrodipicolinate (aminotransferase route): step 1/1. Involved in the synthesis of meso-diaminopimelate (m-DAP or DL-DAP), required for both lysine and peptidoglycan biosynthesis. Catalyzes the direct conversion of tetrahydrodipicolinate to LL-diaminopimelate. The polypeptide is LL-diaminopimelate aminotransferase (Chlamydia caviae (strain ATCC VR-813 / DSM 19441 / 03DC25 / GPIC) (Chlamydophila caviae)).